We begin with the raw amino-acid sequence, 265 residues long: tRNA pseudouridine synthase A (265 aa).

Aspartate 58 serves as the catalytic Nucleophile. Tyrosine 116 lines the substrate pocket.

This sequence belongs to the tRNA pseudouridine synthase TruA family. In terms of assembly, homodimer.

The catalysed reaction is uridine(38/39/40) in tRNA = pseudouridine(38/39/40) in tRNA. Functionally, formation of pseudouridine at positions 38, 39 and 40 in the anticodon stem and loop of transfer RNAs. The polypeptide is tRNA pseudouridine synthase A (Neisseria meningitidis serogroup B (strain ATCC BAA-335 / MC58)).